We begin with the raw amino-acid sequence, 253 residues long: Dihydroanticapsin 7-dehydrogenase (253 aa).

9 to 31 is a binding site for NAD(+); that stretch reads LITGGASGIGYAAVQAFLNQQAN. S139 is a binding site for substrate. Y152 (proton acceptor) is an active-site residue.

It belongs to the short-chain dehydrogenases/reductases (SDR) family.

The enzyme catalyses L-dihydroanticapsin + NAD(+) = L-anticapsin + NADH + H(+). The protein operates within antibiotic biosynthesis; bacilysin biosynthesis. Its function is as follows. Part of the bacABCDEFG operon responsible for the biosynthesis of bacilysin, an irreversible inactivator of the glutaminase domain of glucosamine synthetase. Catalyzes the dehydrogenation of the C7-hydroxyl group in the 4S-tetrahydrotyrosine (4S-H4Tyr) to yield anticapsin (epoxycyclohexanonyl-Ala). The sequence is that of Dihydroanticapsin 7-dehydrogenase from Bacillus subtilis.